We begin with the raw amino-acid sequence, 325 residues long: Glutarate 2-hydroxylase (325 aa).

Fe cation is bound by residues H160, D162, and H292.

The protein belongs to the glutarate hydroxylase family. In terms of assembly, homotetramer. Fe(2+) is required as a cofactor.

It catalyses the reaction glutarate + 2-oxoglutarate + O2 = (S)-2-hydroxyglutarate + succinate + CO2. It functions in the pathway amino-acid degradation. In terms of biological role, acts as an alpha-ketoglutarate-dependent dioxygenase catalyzing hydroxylation of glutarate (GA) to L-2-hydroxyglutarate (L2HG). Functions in a L-lysine degradation pathway that proceeds via cadaverine, glutarate and L-2-hydroxyglutarate. The sequence is that of Glutarate 2-hydroxylase from Escherichia coli O7:K1 (strain IAI39 / ExPEC).